Reading from the N-terminus, the 623-residue chain is MEGYHKPDQQKLQALKDTANRLRISSIQATTAAGSGHPTSCCSAAEIMAVLFFHTMRYKALDPRNPHNDRFVLSKGHAAPILYAVWAEAGFLPEAELLNLRKISSDLDGHPVPKQAFTDVATGSLGQGLGAACGMAYTGKYFDKASYRVYCMLGDGEVSEGSVWEAMAFAGIYKLDNLVAIFDINRLGQSDPAPLQHQVDIYQKRCEAFGWHTIIVDGHSVEELCKAFGQAKHQPTAIIAKTFKGRGITGIEDKEAWHGKPLPKNMAEQIIQEIYSQVQSKKKILATPPQEDAPSVDIANIRMPTPPSYKVGDKIATRKAYGLALAKLGHASDRIIALDGDTKNSTFSELFKKEHPDRFIECYIAEQNMVSIAVGCATRDRTVPFCSTFAAFFTRAFDQIRMAAISESNINLCGSHCGVSIGEDGPSQMALEDLAMFRSVPMSTVFYPSDGVATEKAVELAANTKGICFIRTSRPENAIIYSNNEDFQVGQAKVVLKSKDDQVTVIGAGVTLHEALAAAESLKKDKISIRVLDPFTIKPLDRKLILDSARATKGRILTVEDHYYEGGIGEAVSAAVVGEPGVTVTRLAVSQVPRSGKPAELLKMFGIDKDAIVQAVKGLVTKG.

N-acetylmethionine is present on M1. 2 positions are modified to N6-acetyllysine: K6 and K11. Residue H37 participates in substrate binding. Thiamine diphosphate is bound by residues S40 and H77. S104 carries the post-translational modification Phosphoserine. Residue 123-125 coordinates thiamine diphosphate; it reads GSL. K144 bears the N6-acetyllysine mark. D155 contributes to the Mg(2+) binding site. Thiamine diphosphate-binding residues include G156 and N185. Mg(2+) contacts are provided by N185 and L187. K204, K232, and K241 each carry N6-acetyllysine. K244 and H258 together coordinate thiamine diphosphate. H258 is a substrate binding site. At K260 the chain carries N6-acetyllysine. Y275 carries the phosphotyrosine modification. The residue at position 287 (T287) is a Phosphothreonine. At S295 the chain carries Phosphoserine. The substrate site is built by R318 and S345. S345 is subject to Phosphoserine. K352 is covalently cross-linked (Glycyl lysine isopeptide (Lys-Gly) (interchain with G-Cter in SUMO2)). The active-site Proton donor is E366. F392 lines the thiamine diphosphate pocket. Substrate is bound by residues H416 and D424. Q428 provides a ligand contact to thiamine diphosphate. R474 contacts substrate. An N6-acetyllysine mark is found at K538 and K603.

This sequence belongs to the transketolase family. In terms of assembly, homodimer. It depends on Mg(2+) as a cofactor. Ca(2+) serves as cofactor. Requires Mn(2+) as cofactor. The cofactor is Co(2+). Thiamine diphosphate is required as a cofactor.

It catalyses the reaction D-sedoheptulose 7-phosphate + D-glyceraldehyde 3-phosphate = aldehydo-D-ribose 5-phosphate + D-xylulose 5-phosphate. Its function is as follows. Catalyzes the transfer of a two-carbon ketol group from a ketose donor to an aldose acceptor, via a covalent intermediate with the cofactor thiamine pyrophosphate. The chain is Transketolase (Tkt) from Mus musculus (Mouse).